A 334-amino-acid chain; its full sequence is Glyceraldehyde-3-phosphate dehydrogenase (334 aa).

Residues Thr12–Ile13 and Gly111 contribute to the NAD(+) site. Position 140–142 (Ser140–Asn142) interacts with D-glyceraldehyde 3-phosphate. The active-site Nucleophile is the Cys141. Arg167 provides a ligand contact to NAD(+). His192–Gly193 serves as a coordination point for D-glyceraldehyde 3-phosphate. Gln298 serves as a coordination point for NAD(+).

Belongs to the glyceraldehyde-3-phosphate dehydrogenase family. Homotetramer.

The protein resides in the encapsulin nanocompartment. The catalysed reaction is D-glyceraldehyde 3-phosphate + phosphate + NADP(+) = (2R)-3-phospho-glyceroyl phosphate + NADPH + H(+). The enzyme catalyses D-glyceraldehyde 3-phosphate + phosphate + NAD(+) = (2R)-3-phospho-glyceroyl phosphate + NADH + H(+). It functions in the pathway carbohydrate degradation; glycolysis; pyruvate from D-glyceraldehyde 3-phosphate: step 1/5. Possible cargo protein of a type 4B encapsulin nanocompartment. Active in the presence of NAD and NADP, prefers NADP. The polypeptide is Glyceraldehyde-3-phosphate dehydrogenase (gap) (Pyrococcus furiosus (strain ATCC 43587 / DSM 3638 / JCM 8422 / Vc1)).